The sequence spans 260 residues: Thiazole synthase (260 aa).

Lys-102 functions as the Schiff-base intermediate with DXP in the catalytic mechanism. 1-deoxy-D-xylulose 5-phosphate is bound by residues Gly-163, 189–190, and 211–212; these read AG and NT.

The protein belongs to the ThiG family. Homotetramer. Forms heterodimers with either ThiH or ThiS.

It localises to the cytoplasm. The enzyme catalyses [ThiS sulfur-carrier protein]-C-terminal-Gly-aminoethanethioate + 2-iminoacetate + 1-deoxy-D-xylulose 5-phosphate = [ThiS sulfur-carrier protein]-C-terminal Gly-Gly + 2-[(2R,5Z)-2-carboxy-4-methylthiazol-5(2H)-ylidene]ethyl phosphate + 2 H2O + H(+). It functions in the pathway cofactor biosynthesis; thiamine diphosphate biosynthesis. Catalyzes the rearrangement of 1-deoxy-D-xylulose 5-phosphate (DXP) to produce the thiazole phosphate moiety of thiamine. Sulfur is provided by the thiocarboxylate moiety of the carrier protein ThiS. In vitro, sulfur can be provided by H(2)S. In Geobacter metallireducens (strain ATCC 53774 / DSM 7210 / GS-15), this protein is Thiazole synthase.